Reading from the N-terminus, the 26-residue chain is Somatostatin-1 (26 aa).

Cysteine 15 and cysteine 26 form a disulfide bridge.

The protein belongs to the somatostatin family.

Its subcellular location is the secreted. Somatostatin inhibits the release of somatotropin. This is Somatostatin-1 (sst1) from Amia calva (Bowfin).